The following is a 248-amino-acid chain: Probable transcriptional regulatory protein FTL_0929 (248 aa).

The protein belongs to the TACO1 family.

The protein localises to the cytoplasm. This is Probable transcriptional regulatory protein FTL_0929 from Francisella tularensis subsp. holarctica (strain LVS).